We begin with the raw amino-acid sequence, 120 residues long: Insulin-like peptide 3 (120 aa).

The first 29 residues, 1 to 29 (MGIEMRCQDRRILLPSLLLLILMIGGVQA), serve as a signal peptide directing secretion. Cystine bridges form between Cys-34-Cys-101, Cys-46-Cys-114, and Cys-100-Cys-105. A propeptide spans 51–89 (NAMTKRTLDPVNFNQIDGFEDRSLLERLLSDSSVQMLKT) (connecting peptide).

It belongs to the insulin family. Heterodimer of a B chain and an A chain linked by two disulfide bonds. As to expression, expressed at a high level in seven cells of each larval brain hemisphere that may correspond to neurosecretory cells.

It localises to the secreted. Functionally, possible ligand of InR/insulin-like receptor. This Drosophila melanogaster (Fruit fly) protein is Insulin-like peptide 3.